The sequence spans 42 residues: Crotamine-IV-3 (42 aa).

Disulfide bonds link Cys4–Cys37, Cys11–Cys31, and Cys19–Cys38.

Belongs to the crotamine-myotoxin family. In terms of assembly, monomer. Expressed by the venom gland.

The protein localises to the secreted. Its function is as follows. Cationic peptide that possesses multiple functions. It acts as a cell-penetrating peptide (CPP), and as a potent voltage-gated potassium channel (Kv) inhibitor. It exhibits antimicrobial activities, and hind limb paralysis. It also induces potent blockade of neuromuscular transmission in young chicken biventer cervicis preparation and potent myotoxic effect. In mice, it induces myonecrosis, upon intramuscular or subcutaneous injections. The polypeptide is Crotamine-IV-3 (Crotalus durissus cumanensis (South American rattlesnake)).